A 320-amino-acid chain; its full sequence is Glycerol-3-phosphate dehydrogenase [NAD(P)+] (320 aa).

The NADPH site is built by Phe-11, Arg-30, and Lys-102. The sn-glycerol 3-phosphate site is built by Lys-102, Gly-130, and Ser-132. Residue Ala-134 coordinates NADPH. Sn-glycerol 3-phosphate is bound by residues Lys-185, Asp-238, Ser-248, Arg-249, and Asn-250. Lys-185 functions as the Proton acceptor in the catalytic mechanism. Arg-249 is a binding site for NADPH. Glu-270 serves as a coordination point for NADPH.

Belongs to the NAD-dependent glycerol-3-phosphate dehydrogenase family.

The protein resides in the cytoplasm. It catalyses the reaction sn-glycerol 3-phosphate + NAD(+) = dihydroxyacetone phosphate + NADH + H(+). It carries out the reaction sn-glycerol 3-phosphate + NADP(+) = dihydroxyacetone phosphate + NADPH + H(+). It functions in the pathway membrane lipid metabolism; glycerophospholipid metabolism. In terms of biological role, catalyzes the reduction of the glycolytic intermediate dihydroxyacetone phosphate (DHAP) to sn-glycerol 3-phosphate (G3P), the key precursor for phospholipid synthesis. In Ruegeria sp. (strain TM1040) (Silicibacter sp.), this protein is Glycerol-3-phosphate dehydrogenase [NAD(P)+].